The sequence spans 471 residues: F-box only protein 3 (471 aa).

The region spanning 10-56 is the F-box domain; it reads PLTLESLPTDPLLLILSFLDYRDLINCCYVSRRLSQLSSHDPLWRRH. Residues 278-408 form the ApaG domain; the sequence is VATTGDITVS…FHMACPTFRV (131 aa). A compositionally biased stretch (acidic residues) spans 419–451; the sequence is EYEEMEEEEEEEEEEDEDDDSADMDESDEDDEE. Residues 419–455 form a disordered region; the sequence is EYEEMEEEEEEEEEEDEDDDSADMDESDEDDEEERRR.

Part of a SCF (SKP1-cullin-F-box) protein ligase complex SCF(FBXO3) consisting of FBXO3, SKP1, CUL1 and RBX1. Interacts with PML, interaction is direct and takes place either alone or within the SCF complex. As to quaternary structure, (Microbial infection) Interacts (via ApaG domain) with Rift valley fever virus NSs helical filament; this interaction forms a filamentous E3 which mediates degradation of TFIIH complex through interaction with GT2H1.

The protein resides in the nucleus. It participates in protein modification; protein ubiquitination. Functionally, substrate recognition component of the SCF (SKP1-CUL1-F-box protein)-type E3 ubiquitin ligase complex, SCF(FBXO3), which mediates the ubiquitination and subsequent proteasomal degradation of target proteins. Mediates the ubiquitination of HIPK2 and probably that of EP300, leading to rapid degradation by the proteasome. In the presence of PML, HIPK2 ubiquitination still occurs, but degradation is prevented. PML, HIPK2 and FBXO3 may act synergically to activate p53/TP53-dependent transactivation. The SCF(FBXO3) also acts as a regulator of inflammation by mediating ubiquitination and degradation of FBXL2 in response to lipopolysaccharide (LPS). The SCF(FBXO3) complex specifically recognizes FBXL2 phosphorylated at 'Thr-404' and promotes its ubiquitination. Its function is as follows. (Microbial infection) Associates with the Rift valley fever virus NSs to form a remodeled E3 ligase that triggers efficient proteasomal degradation of targeted proteins. The filamentous E3 ligase targets the TFIIH complex leading to robust inhibition of antiviral immunity and enhances viral pathogenesis. The sequence is that of F-box only protein 3 from Homo sapiens (Human).